We begin with the raw amino-acid sequence, 392 residues long: GDP-mannose transporter (392 aa).

The segment covering 1-11 (MDDKKNEDLEM) has biased composition (basic and acidic residues). The segment at 1–25 (MDDKKNEDLEMRNFNGRSSPSQRDP) is disordered. Over 1-45 (MDDKKNEDLEMRNFNGRSSPSQRDPFLAKPGAAAKRGNSAFDLSN) the chain is Cytoplasmic. A helical membrane pass occupies residues 46–66 (VTNSPGISILAYCLASISMTV). Residues 67-76 (TNKYCVSGSN) lie on the Lumenal side of the membrane. A helical transmembrane segment spans residues 77–97 (WNLNFFYLAIQSVVCIIAIII). The Cytoplasmic portion of the chain corresponds to 98–116 (CKQAGLITNLAPFDTKKAK). Residues 117-139 (TWFPISLLLVGMIYTSTKALQFL) traverse the membrane as a helical segment. The Lumenal portion of the chain corresponds to 140–142 (SVP). Residues 143-165 (VYTIFKNLTIIVIAYGEVLWFGG) traverse the membrane as a helical segment. The Cytoplasmic portion of the chain corresponds to 166-171 (SVTPSA). A helical membrane pass occupies residues 172–191 (LFSFGLMVLSSVVAAWADIQ). The Lumenal portion of the chain corresponds to 192–210 (HALYGGGAAQSAEAAAALS). Residues 211 to 231 (TLNAGYAWMGMNVFCTAAYVL) traverse the membrane as a helical segment. Topologically, residues 232–246 (SMRKVIKKMNFKDWD) are cytoplasmic. Residues 247–267 (TMFYNNLLTIPVLFVCSFIFE) traverse the membrane as a helical segment. N-linked (GlcNAc...) asparagine glycans are attached at residues asparagine 268 and asparagine 273. The Lumenal portion of the chain corresponds to 268–285 (NWSSENLTKNFPLETRNN). Residues 286–306 (LILGMIYSGLATIFISYCSAW) traverse the membrane as a helical segment. Topologically, residues 307–314 (CIRVTSST) are cytoplasmic. Residues 315–337 (TYSMVGALNKLPIAVSGLVFFAA) form a helical membrane-spanning segment. Over 338–340 (PVT) the chain is Lumenal. A helical transmembrane segment spans residues 341 to 360 (FGSVSAIFIGFVSGIVYAWA). Topologically, residues 361-392 (KVRQNQSKGNILPTTQPVMSASSQSNRDAAKA) are cytoplasmic. The interval 373–392 (PTTQPVMSASSQSNRDAAKA) is disordered.

This sequence belongs to the TPT transporter family. SLC35D subfamily. Homooligomer.

It is found in the golgi apparatus membrane. The protein localises to the cytoplasmic vesicle membrane. It localises to the endoplasmic reticulum membrane. Its function is as follows. Involved in the import of GDP-mannose from the cytoplasm into the Golgi lumen. This is GDP-mannose transporter (gmt1) from Botryotinia fuckeliana (strain B05.10) (Noble rot fungus).